A 385-amino-acid chain; its full sequence is Chorismate synthase (385 aa).

The interval 43–63 (PDLDRRRPGTSRHVTQRNEPD) is disordered. The NADP(+) site is built by arginine 48 and arginine 54. Residues 125 to 127 (RSS), 238 to 239 (NA), glycine 278, 293 to 297 (KPTSS), and arginine 319 contribute to the FMN site. Positions 363 to 372 (AQAPRTETAP) are enriched in low complexity. Residues 363–385 (AQAPRTETAPATPPLDAGDDIEA) form a disordered region.

This sequence belongs to the chorismate synthase family. As to quaternary structure, homotetramer. FMNH2 is required as a cofactor.

It carries out the reaction 5-O-(1-carboxyvinyl)-3-phosphoshikimate = chorismate + phosphate. It participates in metabolic intermediate biosynthesis; chorismate biosynthesis; chorismate from D-erythrose 4-phosphate and phosphoenolpyruvate: step 7/7. In terms of biological role, catalyzes the anti-1,4-elimination of the C-3 phosphate and the C-6 proR hydrogen from 5-enolpyruvylshikimate-3-phosphate (EPSP) to yield chorismate, which is the branch point compound that serves as the starting substrate for the three terminal pathways of aromatic amino acid biosynthesis. This reaction introduces a second double bond into the aromatic ring system. The chain is Chorismate synthase from Leptothrix cholodnii (strain ATCC 51168 / LMG 8142 / SP-6) (Leptothrix discophora (strain SP-6)).